Consider the following 202-residue polypeptide: dTTP/UTP pyrophosphatase (202 aa).

Asp-71 acts as the Proton acceptor in catalysis.

This sequence belongs to the Maf family. YhdE subfamily. A divalent metal cation serves as cofactor.

It is found in the cytoplasm. It carries out the reaction dTTP + H2O = dTMP + diphosphate + H(+). The enzyme catalyses UTP + H2O = UMP + diphosphate + H(+). In terms of biological role, nucleoside triphosphate pyrophosphatase that hydrolyzes dTTP and UTP. May have a dual role in cell division arrest and in preventing the incorporation of modified nucleotides into cellular nucleic acids. This is dTTP/UTP pyrophosphatase from Zymomonas mobilis subsp. mobilis (strain ATCC 31821 / ZM4 / CP4).